Here is a 385-residue protein sequence, read N- to C-terminus: Cytochrome b (385 aa).

The next 4 helical transmembrane spans lie at 34-54 (FGSI…ILTM), 78-99 (WFIR…FIHI), 114-134 (WYSG…GYVL), and 179-199 (FLVL…THLL). His84 and His98 together coordinate heme b. Heme b is bound by residues His183 and His197. His202 lines the a ubiquinone pocket. Helical transmembrane passes span 227-247 (FKDI…STLF), 289-309 (LMGV…PFLI), 321-341 (FMQF…WLGA), and 348-368 (YTIM…FLFP).

This sequence belongs to the cytochrome b family. The cytochrome bc1 complex contains 3 respiratory subunits (MT-CYB, CYC1 and UQCRFS1), 2 core proteins (UQCRC1 and UQCRC2) and probably 6 low-molecular weight proteins. The cofactor is heme b.

Its subcellular location is the mitochondrion inner membrane. Component of the ubiquinol-cytochrome c reductase complex (complex III or cytochrome b-c1 complex) that is part of the mitochondrial respiratory chain. The b-c1 complex mediates electron transfer from ubiquinol to cytochrome c. Contributes to the generation of a proton gradient across the mitochondrial membrane that is then used for ATP synthesis. The sequence is that of Cytochrome b (MT-CYB) from Myxine glutinosa (Atlantic hagfish).